We begin with the raw amino-acid sequence, 235 residues long: Type III pantothenate kinase (235 aa).

6–13 (DVGNNYIK) serves as a coordination point for ATP. Residues tyrosine 81 and 88-91 (GTDR) each bind substrate. The active-site Proton acceptor is aspartate 90. K(+) is bound at residue aspartate 111. An ATP-binding site is contributed by threonine 114. Residue threonine 166 coordinates substrate.

It belongs to the type III pantothenate kinase family. Homodimer. Requires NH4(+) as cofactor. K(+) serves as cofactor.

Its subcellular location is the cytoplasm. It catalyses the reaction (R)-pantothenate + ATP = (R)-4'-phosphopantothenate + ADP + H(+). It participates in cofactor biosynthesis; coenzyme A biosynthesis; CoA from (R)-pantothenate: step 1/5. In terms of biological role, catalyzes the phosphorylation of pantothenate (Pan), the first step in CoA biosynthesis. In Cytophaga hutchinsonii (strain ATCC 33406 / DSM 1761 / CIP 103989 / NBRC 15051 / NCIMB 9469 / D465), this protein is Type III pantothenate kinase.